The following is a 45-amino-acid chain: DNA-directed RNA polymerase subunit Rpo12 (45 aa).

Zn(2+) contacts are provided by Cys8, Cys23, and Cys26.

Belongs to the archaeal Rpo12/eukaryotic RPC10 RNA polymerase subunit family. In terms of assembly, part of the RNA polymerase complex. It depends on Zn(2+) as a cofactor.

Its subcellular location is the cytoplasm. The enzyme catalyses RNA(n) + a ribonucleoside 5'-triphosphate = RNA(n+1) + diphosphate. In terms of biological role, DNA-dependent RNA polymerase (RNAP) catalyzes the transcription of DNA into RNA using the four ribonucleoside triphosphates as substrates. The chain is DNA-directed RNA polymerase subunit Rpo12 from Methanocella arvoryzae (strain DSM 22066 / NBRC 105507 / MRE50).